A 178-amino-acid polypeptide reads, in one-letter code: Photosystem I assembly protein Ycf4 (178 aa).

The next 2 membrane-spanning stretches (helical) occupy residues 19 to 39 and 61 to 81; these read ILVALMVTIGGIGFLFASLSS and LIMGLYSLAAALLASYLWAVI.

It belongs to the Ycf4 family.

The protein localises to the cellular thylakoid membrane. Its function is as follows. Seems to be required for the assembly of the photosystem I complex. The chain is Photosystem I assembly protein Ycf4 from Synechococcus sp. (strain CC9311).